Here is a 366-residue protein sequence, read N- to C-terminus: Growth hormone secretagogue receptor type 1 (366 aa).

At 1–40 (MWNATPSEEPGPNLTLPDLGWDAPPENDSLVEELLPLFPT) the chain is on the extracellular side. Residues asparagine 13 and asparagine 27 are each glycosylated (N-linked (GlcNAc...) asparagine). Residues 41–66 (PLLAGVTATCVALFVVGIAGNLLTML) traverse the membrane as a helical segment. At 67-72 (VVSRFR) the chain is on the cytoplasmic side. Residues 73-96 (EMRTTTNLYLSSMAFSDLLIFLCM) form a helical membrane-spanning segment. Topologically, residues 97 to 117 (PLDLFRLWQYRPWNLGNLLCK) are extracellular. The cysteines at positions 116 and 198 are disulfide-linked. The helical transmembrane segment at 118–139 (LFQFVSESCTYATVLTITALSV) threads the bilayer. Over 140-162 (ERYFAICFPLRAKVVVTKGRVKL) the chain is Cytoplasmic. The chain crosses the membrane as a helical span at residues 163-183 (VILVIWAVAFCSAGPIFVLVG). Residues 184-211 (VEHDNGTDPRDTNECRATEFAVRSGLLT) lie on the Extracellular side of the membrane. Residues 212 to 235 (VMVWVSSVFFFLPVFCLTVLYSLI) form a helical membrane-spanning segment. Residues 236-263 (GRKLWRRKRGEAAVGSSLRDQNHKQTVK) lie on the Cytoplasmic side of the membrane. The chain crosses the membrane as a helical span at residues 264–285 (MLAVVVFAFILCWLPFHVGRYL). Topologically, residues 286 to 302 (FSKSLEPGSVEIAQISQ) are extracellular. The helical transmembrane segment at 303–326 (YCNLVSFVLFYLSAAINPILYNIM) threads the bilayer. The Cytoplasmic portion of the chain corresponds to 327-366 (SKKYRVAVFKLLGFEPFSQRKLSTLKDESSRAWTESSINT).

This sequence belongs to the G-protein coupled receptor 1 family. In terms of tissue distribution, pituitary and hypothalamus.

Its subcellular location is the cell membrane. Its function is as follows. Receptor for ghrelin, coupled to G-alpha-11 proteins. Stimulates growth hormone secretion. Also binds other growth hormone releasing peptides (GHRP) (e.g. Met-enkephalin and GHRP-6) as well as non-peptide, low molecular weight secretagogues (e.g. L-692,429, MK-0677, adenosine). The chain is Growth hormone secretagogue receptor type 1 (GHSR) from Sus scrofa (Pig).